The following is a 105-amino-acid chain: MADGSGWQPPRPCESYRAEWKLCRSARHFVHHYYVHGERPACEQWQRDLASCRDWEERRSAEAQQSLCESERARVRAARKHILVWAPRQSPPPDWHLPLPQEKDE.

This sequence belongs to the UPF0545 family. As to quaternary structure, interacts with RTN4 isoform A/Nogo-A; the interaction results in enhanced RTN4-mediated inhibition of AMPA receptor clustering. Also interacts with NCAM1, RANBP2 and CCT8. Rapidly degraded by proteolysis following neuronal stimulation, resulting in increased AMPA receptor clustering.

The protein resides in the synapse. It localises to the synaptic cleft. In terms of biological role, negatively regulates long-term potentiation and modulates adult synaptic plasticity. Stabilizes the interaction of RTN4 isoform A/Nogo-A with its receptors, inhibiting clustering of postsynaptic AMPA receptors at synaptic sites. Upon neuronal stimulation, degraded at synapses, reducing RTN4 signaling and allowing AMPA receptor clustering at individual synapses. In Pongo abelii (Sumatran orangutan), this protein is Synaptic plasticity regulator PANTS.